Reading from the N-terminus, the 1465-residue chain is DNA polymerase III PolC-type (1465 aa).

In terms of domain architecture, Exonuclease spans 427–583 (YVVFDVETTG…YDAEATGRLL (157 aa)).

Belongs to the DNA polymerase type-C family. PolC subfamily.

The protein localises to the cytoplasm. It catalyses the reaction DNA(n) + a 2'-deoxyribonucleoside 5'-triphosphate = DNA(n+1) + diphosphate. Required for replicative DNA synthesis. This DNA polymerase also exhibits 3' to 5' exonuclease activity. This chain is DNA polymerase III PolC-type, found in Streptococcus pyogenes serotype M2 (strain MGAS10270).